A 102-amino-acid chain; its full sequence is Large ribosomal subunit protein bL21 (102 aa).

It belongs to the bacterial ribosomal protein bL21 family. In terms of assembly, part of the 50S ribosomal subunit. Contacts protein L20.

Functionally, this protein binds to 23S rRNA in the presence of protein L20. The protein is Large ribosomal subunit protein bL21 of Ligilactobacillus salivarius (strain UCC118) (Lactobacillus salivarius).